Consider the following 649-residue polypeptide: Phospholipase A1 PLIP1, chloroplastic (649 aa).

The transit peptide at 1–67 (MAFNTAMAST…NNRILAVSVR (67 aa)) directs the protein to the chloroplast. A GXSXG motif is present at residues 420 to 424 (GHSLG). The active-site Acyl-ester intermediate is Ser422. Residues Asp483 and His593 each act as charge relay system in the active site.

It belongs to the AB hydrolase superfamily. Lipase family.

Its subcellular location is the plastid. It is found in the chloroplast thylakoid membrane. The catalysed reaction is a 1,2-diacyl-sn-glycero-3-phosphocholine + H2O = a 2-acyl-sn-glycero-3-phosphocholine + a fatty acid + H(+). The enzyme catalyses a 1,2-diacyl-3-O-(beta-D-galactosyl)-sn-glycerol + 2 H2O = 3-beta-D-galactosyl-sn-glycerol + 2 a fatty acid + 2 H(+). Functionally, sn-1-specific phospholipase A1 involved in seed oil biosynthesis. Hydrolyzes polyunsaturated acyl groups from a unique chloroplast-specific phosphatidylglycerol (PG) that contains 16:1 delta 3-trans as its second acyl group. The polyunsaturated acyl groups released by PLIP1 are exported from the chloroplast, reincorporated into phosphatidylcholine (PC), and ultimately enter seed triacylglycerol (TAG). In vitro, possesses broad substrate specificity. Can hydrolyze the galactolipid monogalactosyldiacylglycerol (MGDG), and the phoshpolipids phosphatidylcholine (PC), phosphatidylethanolamine (PE), phosphatidic acid (PA), phosphatidylserine (PS) phosphatidylglycerol (PG) and phosphatidylinositol (PI). The polypeptide is Phospholipase A1 PLIP1, chloroplastic (Arabidopsis thaliana (Mouse-ear cress)).